We begin with the raw amino-acid sequence, 585 residues long: Pyruvate kinase (585 aa).

Arg32 serves as a coordination point for substrate. Residues Asn34, Ser36, Asp66, and Thr67 each contribute to the K(+) site. 34–37 (NFSH) lines the ATP pocket. ATP is bound by residues Arg73 and Lys156. Residue Glu221 coordinates Mg(2+). 3 residues coordinate substrate: Gly244, Asp245, and Thr277. Asp245 provides a ligand contact to Mg(2+).

It belongs to the pyruvate kinase family. The protein in the C-terminal section; belongs to the PEP-utilizing enzyme family. Requires Mg(2+) as cofactor. It depends on K(+) as a cofactor.

It catalyses the reaction pyruvate + ATP = phosphoenolpyruvate + ADP + H(+). The protein operates within carbohydrate degradation; glycolysis; pyruvate from D-glyceraldehyde 3-phosphate: step 5/5. The protein is Pyruvate kinase (pyk) of Staphylococcus epidermidis (strain ATCC 35984 / DSM 28319 / BCRC 17069 / CCUG 31568 / BM 3577 / RP62A).